We begin with the raw amino-acid sequence, 341 residues long: 33 kDa chaperonin (341 aa).

2 disulfides stabilise this stretch: Cys-245-Cys-247 and Cys-278-Cys-281.

The protein belongs to the HSP33 family. In terms of processing, under oxidizing conditions two disulfide bonds are formed involving the reactive cysteines. Under reducing conditions zinc is bound to the reactive cysteines and the protein is inactive.

The protein resides in the cytoplasm. Redox regulated molecular chaperone. Protects both thermally unfolding and oxidatively damaged proteins from irreversible aggregation. Plays an important role in the bacterial defense system toward oxidative stress. This is 33 kDa chaperonin from Thermus thermophilus (strain ATCC 27634 / DSM 579 / HB8).